Here is an 873-residue protein sequence, read N- to C-terminus: Protein SEY1 (873 aa).

Residues methionine 1–histidine 21 form a disordered region. Over methionine 1–glutamine 749 the chain is Cytoplasmic. In terms of domain architecture, GB1/RHD3-type G spans glycine 49–alanine 307. Glycine 59–serine 66 contacts GTP. Residues serine 482–glutamate 506 adopt a coiled-coil conformation. The disordered stretch occupies residues leucine 676–aspartate 703. Over residues alanine 690–aspartate 703 the composition is skewed to acidic residues. A helical membrane pass occupies residues valine 750–leucine 770. Residues arginine 771–proline 773 are Lumenal-facing. The chain crosses the membrane as a helical span at residues valine 774–leucine 794. Topologically, residues tryptophan 795–phenylalanine 873 are cytoplasmic. The interval arginine 828–phenylalanine 873 is disordered. The span at alanine 839–aspartate 863 shows a compositional bias: basic and acidic residues. A compositionally biased stretch (acidic residues) spans glutamate 864 to phenylalanine 873.

Belongs to the TRAFAC class dynamin-like GTPase superfamily. GB1/RHD3 GTPase family. RHD3 subfamily.

It is found in the endoplasmic reticulum membrane. Functionally, cooperates with the reticulon proteins and tubule-shaping DP1 family proteins to generate and maintain the structure of the tubular endoplasmic reticulum network. Has GTPase activity, which is required for its function in ER organization. This Ajellomyces capsulatus (strain G186AR / H82 / ATCC MYA-2454 / RMSCC 2432) (Darling's disease fungus) protein is Protein SEY1.